We begin with the raw amino-acid sequence, 231 residues long: Quercetin 2,3-dioxygenase (231 aa).

4 residues coordinate a divalent metal cation: His57, His59, His101, and Glu103.

The protein belongs to the pirin family. Requires Zn(2+) as cofactor. The cofactor is Co(2+). Fe(2+) serves as cofactor.

It catalyses the reaction quercetin + O2 = 2-(3,4-dihydroxybenzoyloxy)-4,6-dihydroxybenzoate + CO. It functions in the pathway flavonoid metabolism; quercetin degradation. Inhibited by kojic acid, sodium diethyldithiocarbamate and 1,10-phenanthroline monohydrochloride. Functionally, has quercetin 2,3-dioxygenase activity in vitro. Its physiological role is unknown; however, may provide a mechanism that would avoid inhibition of key cellular proteins, such as DNA gyrase, by quercetin. This chain is Quercetin 2,3-dioxygenase (yhhW), found in Escherichia coli (strain K12).